A 235-amino-acid polypeptide reads, in one-letter code: Ribonuclease 3 (235 aa).

The RNase III domain occupies 6-135 (LISLEKILGF…VIGAVYFDCG (130 aa)). Position 48 (Glu-48) interacts with Mg(2+). The active site involves Asp-52. The Mg(2+) site is built by Asn-121 and Glu-124. Residue Glu-124 is part of the active site. A DRBM domain is found at 162 to 231 (DEKTTLQELL…AKKALELLKN (70 aa)).

It belongs to the ribonuclease III family. Homodimer. Mg(2+) is required as a cofactor.

It localises to the cytoplasm. It catalyses the reaction Endonucleolytic cleavage to 5'-phosphomonoester.. In terms of biological role, digests double-stranded RNA. Involved in the processing of primary rRNA transcript to yield the immediate precursors to the large and small rRNAs (23S and 16S). Processes some mRNAs, and tRNAs when they are encoded in the rRNA operon. Processes pre-crRNA and tracrRNA of type II CRISPR loci if present in the organism. The protein is Ribonuclease 3 of Carboxydothermus hydrogenoformans (strain ATCC BAA-161 / DSM 6008 / Z-2901).